We begin with the raw amino-acid sequence, 229 residues long: Potassium/proton antiporter CemA (229 aa).

3 helical membrane-spanning segments follow: residues Ala-6 to Cys-26, Ile-107 to Gly-127, and Ile-189 to Ile-209.

This sequence belongs to the CemA family.

The protein resides in the plastid. Its subcellular location is the chloroplast inner membrane. It catalyses the reaction K(+)(in) + H(+)(out) = K(+)(out) + H(+)(in). Functionally, contributes to K(+)/H(+) antiport activity by supporting proton efflux to control proton extrusion and homeostasis in chloroplasts in a light-dependent manner to modulate photosynthesis. Prevents excessive induction of non-photochemical quenching (NPQ) under continuous-light conditions. Indirectly promotes efficient inorganic carbon uptake into chloroplasts. This Arabidopsis thaliana (Mouse-ear cress) protein is Potassium/proton antiporter CemA.